A 471-amino-acid polypeptide reads, in one-letter code: UDP-N-acetylmuramate--L-alanine ligase (471 aa).

An ATP-binding site is contributed by 114–120; it reads GTHGKTT.

Belongs to the MurCDEF family.

It localises to the cytoplasm. The enzyme catalyses UDP-N-acetyl-alpha-D-muramate + L-alanine + ATP = UDP-N-acetyl-alpha-D-muramoyl-L-alanine + ADP + phosphate + H(+). The protein operates within cell wall biogenesis; peptidoglycan biosynthesis. Its function is as follows. Cell wall formation. This is UDP-N-acetylmuramate--L-alanine ligase from Agrobacterium fabrum (strain C58 / ATCC 33970) (Agrobacterium tumefaciens (strain C58)).